A 75-amino-acid chain; its full sequence is F1845 fimbrial adhesin operon regulatory protein DaaF (75 aa).

In terms of biological role, may have a possible regulatory function on the expression of the other daa genes. The protein is F1845 fimbrial adhesin operon regulatory protein DaaF (daaF) of Escherichia coli.